The following is a 790-amino-acid chain: IQ motif and ubiquitin-like domain-containing protein (790 aa).

Residues 1–17 (MSNQPKKYETQNIANST) are compositionally biased toward polar residues. Residues 1 to 49 (MSNQPKKYETQNIANSTEESDAFDIVTIPVPSEEPQESDQTEEHESGIE) are disordered. The Ubiquitin-like domain maps to 130 to 206 (ATVKVVLIPV…IQVEIFSTNP (77 aa)). The IQ domain maps to 337-366 (RLKAVIVIQTYYRQWHAKIFVEDLRRQKSL).

Component of the axonemal radial spoke 1 (RS1) complex, at least composed of spoke head proteins RSPH1, RSPH3, RSPH9 and the cilia-specific component RSPH4A or sperm-specific component RSPH6A, spoke stalk proteins RSPH14, DNAJB13, DYDC1, ROPN1L and NME5, and the anchor protein IQUB. Does not appear to be part of radial spoke complexes 2 or 3 (RS2 or RS3). Interacts with CALM1. Interacts with DNAJB13. Interacts with DYNLL2. Interacts with NME5. Interacts with RSPH3. Interacts with RSPH9. Interacts with ZMYND10. Interacts with calmodulin; the interaction occurs in conditions of low but not high calcium.

Its subcellular location is the cytoplasm. The protein resides in the cytoskeleton. The protein localises to the flagellum axoneme. It localises to the cell projection. It is found in the cilium. Functionally, adapter protein that anchors the radial spoke 1 (RS1) complex to the A microtubule of outer doublet microtubules in axonemes. The triple radial spokes (RS1, RS2 and RS3) are required to modulate beating of the sperm flagellum. May play a role in inhibiting signaling via MAPK1/ERK2 and MAPK3/ERK1. Additionally, may play a role in the functioning of cilia. Not required for the functioning of tracheal or ependymal cilia. In Macaca fascicularis (Crab-eating macaque), this protein is IQ motif and ubiquitin-like domain-containing protein (IQUB).